The chain runs to 217 residues: GTP-binding protein yptV2 (217 aa).

Residue 20–27 (GDSGVGKS) participates in GTP binding. The Effector region signature appears at 42–50 (FITTIGIDF). Residues 68 to 72 (DTAGQ) and 126 to 129 (NKLD) each bind GTP. Positions 198-217 (QPVRLTSGSPSPAQGKSCCR) are disordered. The span at 201 to 211 (RLTSGSPSPAQ) shows a compositional bias: polar residues. 2 S-geranylgeranyl cysteine lipidation sites follow: Cys215 and Cys216.

The protein belongs to the small GTPase superfamily. Rab family.

It is found in the cell membrane. Protein transport. Probably involved in vesicular traffic. This Volvox carteri (Green alga) protein is GTP-binding protein yptV2 (YPTV2).